The primary structure comprises 795 residues: Putative replication origin-binding protein (795 aa).

The Helicase ATP-binding domain maps to 121-289 (WLSNDKIKTL…DNFGKSIVVN (169 aa)). Position 134–141 (134–141 (SPMGTGKT)) interacts with ATP.

Belongs to the mimivirus R1 family.

Its function is as follows. Probably involved in DNA replication. May bind the genome origin of replication (ori). In Acanthamoeba polyphaga (Amoeba), this protein is Putative replication origin-binding protein.